The primary structure comprises 288 residues: Phosphatidylserine decarboxylase proenzyme (288 aa).

Residues D101, H158, and S262 each act as charge relay system; for autoendoproteolytic cleavage activity in the active site. The Schiff-base intermediate with substrate; via pyruvic acid; for decarboxylase activity role is filled by S262. S262 carries the post-translational modification Pyruvic acid (Ser); by autocatalysis.

It belongs to the phosphatidylserine decarboxylase family. PSD-B subfamily. Prokaryotic type I sub-subfamily. Heterodimer of a large membrane-associated beta subunit and a small pyruvoyl-containing alpha subunit. Requires pyruvate as cofactor. In terms of processing, is synthesized initially as an inactive proenzyme. Formation of the active enzyme involves a self-maturation process in which the active site pyruvoyl group is generated from an internal serine residue via an autocatalytic post-translational modification. Two non-identical subunits are generated from the proenzyme in this reaction, and the pyruvate is formed at the N-terminus of the alpha chain, which is derived from the carboxyl end of the proenzyme. The autoendoproteolytic cleavage occurs by a canonical serine protease mechanism, in which the side chain hydroxyl group of the serine supplies its oxygen atom to form the C-terminus of the beta chain, while the remainder of the serine residue undergoes an oxidative deamination to produce ammonia and the pyruvoyl prosthetic group on the alpha chain. During this reaction, the Ser that is part of the protease active site of the proenzyme becomes the pyruvoyl prosthetic group, which constitutes an essential element of the active site of the mature decarboxylase.

Its subcellular location is the cell membrane. The catalysed reaction is a 1,2-diacyl-sn-glycero-3-phospho-L-serine + H(+) = a 1,2-diacyl-sn-glycero-3-phosphoethanolamine + CO2. The protein operates within phospholipid metabolism; phosphatidylethanolamine biosynthesis; phosphatidylethanolamine from CDP-diacylglycerol: step 2/2. Its function is as follows. Catalyzes the formation of phosphatidylethanolamine (PtdEtn) from phosphatidylserine (PtdSer). In Alkalilimnicola ehrlichii (strain ATCC BAA-1101 / DSM 17681 / MLHE-1), this protein is Phosphatidylserine decarboxylase proenzyme.